The sequence spans 155 residues: Small ribosomal subunit protein uS7 (155 aa).

Belongs to the universal ribosomal protein uS7 family. In terms of assembly, part of the 30S ribosomal subunit. Contacts proteins S9 and S11.

In terms of biological role, one of the primary rRNA binding proteins, it binds directly to 16S rRNA where it nucleates assembly of the head domain of the 30S subunit. Is located at the subunit interface close to the decoding center, probably blocks exit of the E-site tRNA. The sequence is that of Small ribosomal subunit protein uS7 from Xanthomonas campestris pv. campestris (strain 8004).